Reading from the N-terminus, the 644-residue chain is Chaperone protein HscA (644 aa).

This sequence belongs to the heat shock protein 70 family.

Functionally, chaperone involved in the maturation of iron-sulfur cluster-containing proteins. Has a low intrinsic ATPase activity which is markedly stimulated by HscB. Involved in the maturation of IscU. This is Chaperone protein HscA from Yersinia pseudotuberculosis serotype I (strain IP32953).